Here is a 477-residue protein sequence, read N- to C-terminus: Cytochrome P450 708A2 (477 aa).

The chain crosses the membrane as a helical span at residues 3–23; it reads FVWSAAVWVIAVAAVVISKWL. C426 lines the heme pocket.

The protein belongs to the cytochrome P450 family. Heme serves as cofactor. Expressed primarily in the root epidermis.

Its subcellular location is the membrane. Functionally, hydroxylates thalianol into thalian-diol. The sequence is that of Cytochrome P450 708A2 (CYP708A2) from Arabidopsis thaliana (Mouse-ear cress).